The primary structure comprises 91 residues: Potassium channel toxin MeuTXK-beta-1 (91 aa).

The signal sequence occupies residues 1–19; that stretch reads MQRNLVVLLFLGMVALSSC. The 38-residue stretch at 54-91 folds into the BetaSPN-type CS-alpha/beta domain; that stretch reads QFGCPAYQGYCDDHCQDIEKKEGFCHGFKCKCGIPMGF. Cystine bridges form between cysteine 57–cysteine 78, cysteine 64–cysteine 83, and cysteine 68–cysteine 85.

In terms of tissue distribution, expressed by the venom gland.

It is found in the secreted. In terms of biological role, has a low affinity binding to potassium channels of rat brain synaptosomes. Displays weak antibacterial activity against Stenotrophomonas sp. Strongly inhibits the development of the Plasmodium berghei ookinetes. Displays slight hemolytic effect on mouse erythrocytes. Induces cytolysis on Xenopus oocytes at high concentrations. Is not toxic towards mice and towards the insect Tenebrio molitor. The sequence is that of Potassium channel toxin MeuTXK-beta-1 from Mesobuthus eupeus (Lesser Asian scorpion).